The primary structure comprises 271 residues: Ribosomal RNA small subunit methyltransferase A (271 aa).

S-adenosyl-L-methionine contacts are provided by L20, G45, E66, D90, and N112.

Belongs to the class I-like SAM-binding methyltransferase superfamily. rRNA adenine N(6)-methyltransferase family. RsmA subfamily.

It is found in the cytoplasm. The enzyme catalyses adenosine(1518)/adenosine(1519) in 16S rRNA + 4 S-adenosyl-L-methionine = N(6)-dimethyladenosine(1518)/N(6)-dimethyladenosine(1519) in 16S rRNA + 4 S-adenosyl-L-homocysteine + 4 H(+). Functionally, specifically dimethylates two adjacent adenosines (A1518 and A1519) in the loop of a conserved hairpin near the 3'-end of 16S rRNA in the 30S particle. May play a critical role in biogenesis of 30S subunits. The chain is Ribosomal RNA small subunit methyltransferase A from Blochmanniella floridana.